Consider the following 183-residue polypeptide: MITMDDIVREGNPILRKVAEPVELPLTDEDKQTLVDMLEFIKNSQDPEIAEKYGLRPGVGLAAPQIGISKRLFAIHATDENGNLYSMGIANPKVVSHSVETNELENGEGCLSVDRDVPGLVPRRARLTITGVDHEGNDVRMRLRGYIAIVFQHELDHLDGIMFYDRIEGLEDPFKKPLPGFAL.

2 residues coordinate Fe cation: Cys-110 and His-153. The active site involves Glu-154. Residue His-157 coordinates Fe cation.

It belongs to the polypeptide deformylase family. It depends on Fe(2+) as a cofactor.

It carries out the reaction N-terminal N-formyl-L-methionyl-[peptide] + H2O = N-terminal L-methionyl-[peptide] + formate. Removes the formyl group from the N-terminal Met of newly synthesized proteins. Requires at least a dipeptide for an efficient rate of reaction. N-terminal L-methionine is a prerequisite for activity but the enzyme has broad specificity at other positions. The chain is Peptide deformylase from Shouchella clausii (strain KSM-K16) (Alkalihalobacillus clausii).